Reading from the N-terminus, the 856-residue chain is Lon protease homolog 2, peroxisomal (856 aa).

The region spanning 13–222 (LPLLLTHEGV…VTIPLLLRQI (210 aa)) is the Lon N-terminal domain. Position 379–386 (379–386 (GPPGVGKT)) interacts with ATP. Residues 586–608 (GQHREHKSEHLEAPEGEERKESV) show a composition bias toward basic and acidic residues. A disordered region spans residues 586-614 (GQHREHKSEHLEAPEGEERKESVPEGSKS). Positions 655 to 841 (LNQPGVAIGL…DEVLNAAFDG (187 aa)) constitute a Lon proteolytic domain. Catalysis depends on residues Ser747 and Lys790. The Microbody targeting signal motif lies at 854–856 (SKL).

This sequence belongs to the peptidase S16 family.

The protein resides in the peroxisome matrix. It carries out the reaction Hydrolysis of proteins in presence of ATP.. ATP-dependent serine protease that mediates the selective degradation of misfolded and unassembled polypeptides in the peroxisomal matrix. Necessary for type 2 peroxisome targeting signal (PTS2)-containing protein processing and facilitates peroxisome matrix protein import. In Xenopus laevis (African clawed frog), this protein is Lon protease homolog 2, peroxisomal (lonp2).